Consider the following 142-residue polypeptide: Large ribosomal subunit protein uL13 (142 aa).

Belongs to the universal ribosomal protein uL13 family. Part of the 50S ribosomal subunit.

In terms of biological role, this protein is one of the early assembly proteins of the 50S ribosomal subunit, although it is not seen to bind rRNA by itself. It is important during the early stages of 50S assembly. The protein is Large ribosomal subunit protein uL13 of Paraburkholderia phytofirmans (strain DSM 17436 / LMG 22146 / PsJN) (Burkholderia phytofirmans).